The chain runs to 238 residues: Fatty acid metabolism regulator protein (238 aa).

The HTH gntR-type domain maps to 6–74 (KGPASFAEKY…HGKPTRVNNF (69 aa)). The segment at residues 34–53 (ERELSELIGVTRTTLREVLQ) is a DNA-binding region (H-T-H motif).

As to quaternary structure, homodimer.

The protein resides in the cytoplasm. Its function is as follows. Multifunctional regulator of fatty acid metabolism. This chain is Fatty acid metabolism regulator protein, found in Shewanella baltica (strain OS185).